We begin with the raw amino-acid sequence, 124 residues long: Small ribosomal subunit protein uS12 (124 aa).

The tract at residues 1–28 is disordered; the sequence is MPTINQLVRKGRTPKVSKTKAPALKGSP. A compositionally biased stretch (basic residues) spans 9–18; that stretch reads RKGRTPKVSK. Asp89 is subject to 3-methylthioaspartic acid.

This sequence belongs to the universal ribosomal protein uS12 family. As to quaternary structure, part of the 30S ribosomal subunit. Contacts proteins S8 and S17. May interact with IF1 in the 30S initiation complex.

In terms of biological role, with S4 and S5 plays an important role in translational accuracy. Functionally, interacts with and stabilizes bases of the 16S rRNA that are involved in tRNA selection in the A site and with the mRNA backbone. Located at the interface of the 30S and 50S subunits, it traverses the body of the 30S subunit contacting proteins on the other side and probably holding the rRNA structure together. The combined cluster of proteins S8, S12 and S17 appears to hold together the shoulder and platform of the 30S subunit. The chain is Small ribosomal subunit protein uS12 from Paenarthrobacter aurescens (strain TC1).